The sequence spans 127 residues: MASTLTVRKSLSDRAKARARRQARGRKKIFGTVERPRMVVTRSSKHVFVQVIDDVAGNTLVSASTMEAELREMSGDKTAKAARVGTIIGERAKAAGITKVVFDKAGNQYHGRIAALADAAREAGLDF.

A disordered region spans residues 1-26; it reads MASTLTVRKSLSDRAKARARRQARGR. Basic residues predominate over residues 17 to 26; that stretch reads ARARRQARGR.

It belongs to the universal ribosomal protein uL18 family. Part of the 50S ribosomal subunit; part of the 5S rRNA/L5/L18/L25 subcomplex. Contacts the 5S and 23S rRNAs.

Functionally, this is one of the proteins that bind and probably mediate the attachment of the 5S RNA into the large ribosomal subunit, where it forms part of the central protuberance. This Cutibacterium acnes (strain DSM 16379 / KPA171202) (Propionibacterium acnes) protein is Large ribosomal subunit protein uL18.